Consider the following 185-residue polypeptide: Ion-translocating oxidoreductase complex subunit B (185 aa).

A hydrophobic region spans residues 1 to 26 (MNHILLIILIFAALALIFGLLLGFAA). Positions 32-90 (ESDPIVDQLDALLPQTQCGQCGYPGCRPYAEAIANGDSINKCVPGGAQTIQNIADLMGV) constitute a 4Fe-4S domain. [4Fe-4S] cluster is bound by residues cysteine 49, cysteine 52, cysteine 57, cysteine 73, cysteine 115, cysteine 118, cysteine 121, cysteine 125, cysteine 145, cysteine 148, cysteine 151, and cysteine 155. 2 consecutive 4Fe-4S ferredoxin-type domains span residues 106–135 (RVAF…GAPK) and 136–165 (LMHT…MIEL).

This sequence belongs to the 4Fe4S bacterial-type ferredoxin family. RnfB subfamily. In terms of assembly, the complex is composed of six subunits: RnfA, RnfB, RnfC, RnfD, RnfE and RnfG. The cofactor is [4Fe-4S] cluster.

The protein resides in the cell inner membrane. Part of a membrane-bound complex that couples electron transfer with translocation of ions across the membrane. In Tolumonas auensis (strain DSM 9187 / NBRC 110442 / TA 4), this protein is Ion-translocating oxidoreductase complex subunit B.